Consider the following 269-residue polypeptide: Surfeit locus protein 4 (269 aa).

A run of 6 helical transmembrane segments spans residues 64–84 (FLAS…CILV), 92–112 (YACF…SILW), 157–177 (MQLG…HFDM), 179–199 (FFYI…AIGF), 203–223 (LAAL…NAFW), and 242–262 (TMSV…GVSM). Positions 266–269 (KKEW) match the Di-lysine motif motif.

Belongs to the SURF4 family.

The protein localises to the endoplasmic reticulum membrane. Its subcellular location is the endoplasmic reticulum-Golgi intermediate compartment membrane. The protein resides in the golgi apparatus membrane. In terms of biological role, endoplasmic reticulum cargo receptor that mediates the export of lipoproteins by recruiting cargos into COPII vesicles to facilitate their secretion. Acts as a cargo receptor for lipoproteins bearing both APOB and APOA1, thereby regulating lipoprotein delivery and the maintenance of lipid homeostasis. The chain is Surfeit locus protein 4 from Gallus gallus (Chicken).